The primary structure comprises 146 residues: uncharacterized protein (146 aa).

Positions 1–137 constitute an HTH marR-type domain; it reads MLSQEFFNSF…TINVMNQIHE (137 aa).

This is an uncharacterized protein from Staphylococcus aureus (strain N315).